The following is an 894-amino-acid chain: Alanine--tRNA ligase (894 aa).

The protein belongs to the class-II aminoacyl-tRNA synthetase family.

It localises to the cytoplasm. It catalyses the reaction tRNA(Ala) + L-alanine + ATP = L-alanyl-tRNA(Ala) + AMP + diphosphate. In terms of biological role, catalyzes the attachment of alanine to tRNA(Ala) in a two-step reaction: alanine is first activated by ATP to form Ala-AMP and then transferred to the acceptor end of tRNA(Ala). Also edits incorrectly charged Ser-tRNA(Ala) and Gly-tRNA(Ala) via its editing domain. This chain is Alanine--tRNA ligase (alaS), found in Leuconostoc citreum (strain KM20).